Here is a 219-residue protein sequence, read N- to C-terminus: Protein matrimony (219 aa).

Residues 74–99 (PPAKAHPHPHQHQHHHHHHKHIHRTQ) show a composition bias toward basic residues. The segment at 74-104 (PPAKAHPHPHQHQHHHHHHKHIHRTQLKPPP) is disordered. Residues 159 to 219 (NHAANVEQIL…NRIMDVLQTL (61 aa)) form the SAM domain.

In terms of assembly, interacts with polo. Interacts with cort. In terms of processing, probably ubiquitinated: degraded during the oocyte-to-embryo transition by the anaphase promoting complex/cyclosome (APC/C) containing cort protein.

It localises to the nucleus. It is found in the chromosome. In terms of biological role, polo kinase inhibitor required to maintain G2 arrest in the meiotic cell cycle in females. Holds heterochromatically paired homologs together from the end of pachytene until metaphase I. Haploinsufficient locus for homologous achiasmate segregation and may be required for the maintenance of heterochromatic pairings. The polypeptide is Protein matrimony (mtrm) (Drosophila yakuba (Fruit fly)).